The primary structure comprises 476 residues: MAKFFLTAAFAAAALAAPVVEERQNCAPTWGQCGGIGFNGPTCCQSGSTCVKQNDWYSQCLPGSQVTTTSTTSTSSSSTTSRATSTTRTGGVTSITTAPTRTVTIPGGATTTASYNGNPFEGVQLWANNYYRSEVHTLAIPQITDPALRAAASAVAEVPSFQWLDRNVTVDTLLVETLSEIRAANQAGANPPYAAQIVVYDLPDRDCAAAASNGEWAIANNGANNYKGYINRIREILISFSDVRTILVIEPDSLANMVTNMNVAKCSGAASTYRELTIYALKQLDLPHVAMYMDAGHAGWLGWPANIQPAAELFAKIYEDAGKPRAVRGLATNVANYNAWSISSPPPYTSPNPNYDEKHYIEAFRPLLEARGFPAQFIVDQGRSGKQPTGQKEWGHWCNAIGTGFGMRPTANTGHQYVDAFVWVKPGGECDGTSDTTAARYDYHCGLEDALKPAPEAGQWFQAYFEQLLRNANPPF.

Positions 1–16 (MAKFFLTAAFAAAALA) are cleaved as a signal peptide. 2 cysteine pairs are disulfide-bonded: C33-C50 and C44-C60. Residues 33-60 (CGGIGFNGPTCCQSGSTCVKQNDWYSQC) form the CBM1 domain. The segment at 67 to 94 (TTTSTTSTSSSSTTSRATSTTRTGGVTS) is disordered. O-linked (Man...) threonine glycosylation is present at T144. A glycan (O-linked (Man...) serine) is linked at S153. Residues W163 and D165 each contribute to the substrate site. N-linked (GlcNAc...) asparagine glycosylation is present at N167. The interval 200-222 (YDLPDRDCAAAASNGEWAIANNG) is substrate binding loop 1. D252 acts as the Proton donor in catalysis. H297, W300, N336, W397, K425, and E429 together coordinate substrate. The interval 423 to 461 (WVKPGGECDGTSDTTAARYDYHCGLEDALKPAPEAGQWF) is substrate binding loop 2. Residue D431 is the Proton acceptor of the active site.

Belongs to the glycosyl hydrolase 6 (cellulase A) family. Monomer.

The enzyme catalyses Hydrolysis of (1-&gt;4)-beta-D-glucosidic linkages in cellulose and cellotetraose, releasing cellobiose from the non-reducing ends of the chains.. Its function is as follows. Plays a central role in the recycling of plant biomass. The biological conversion of cellulose to glucose generally requires three types of hydrolytic enzymes: (1) Endoglucanases which cut internal beta-1,4-glucosidic bonds; (2) Exocellobiohydrolases that cut the disaccharide cellobiose from the non-reducing end of the cellulose polymer chain; (3) Beta-1,4-glucosidases which hydrolyze the cellobiose and other short cello-oligosaccharides to glucose. This is Exoglucanase-6A from Humicola insolens (Soft-rot fungus).